We begin with the raw amino-acid sequence, 378 residues long: Probable pectin lyase A (378 aa).

The first 18 residues, 1–18 (MKYQDLLAIAGCIANAGA), serve as a signal peptide directing secretion. Intrachain disulfides connect Cys-81–Cys-100 and Cys-90–Cys-224. Asn-127 carries an N-linked (GlcNAc...) asparagine glycan. Residue Arg-254 is part of the active site. Cys-321 and Cys-329 form a disulfide bridge.

This sequence belongs to the polysaccharide lyase 1 family.

It localises to the secreted. The enzyme catalyses Eliminative cleavage of (1-&gt;4)-alpha-D-galacturonan methyl ester to give oligosaccharides with 4-deoxy-6-O-methyl-alpha-D-galact-4-enuronosyl groups at their non-reducing ends.. Its function is as follows. Pectinolytic enzymes consist of four classes of enzymes: pectin lyase, polygalacturonase, pectin methylesterase and rhamnogalacturonase. Among pectinolytic enzymes, pectin lyase is the most important in depolymerization of pectin, since it cleaves internal glycosidic bonds of highly methylated pectins. This chain is Probable pectin lyase A (pelA), found in Aspergillus fumigatus (strain CBS 144.89 / FGSC A1163 / CEA10) (Neosartorya fumigata).